The chain runs to 390 residues: uncharacterized protein (390 aa).

The region spanning 215-325 (SRFKRKTLGK…KLIKDCEMVE (111 aa)) is the Glutaredoxin domain.

This is an uncharacterized protein from Arabidopsis thaliana (Mouse-ear cress).